Reading from the N-terminus, the 1728-residue chain is Hybrid PKS-NRPS synthetase TAS1 (1728 aa).

Residues 153–499 (SPLSKAQMAL…MDPTLLDFKV (347 aa)) are condensation (C) domain. An adenylation (A) domain region spans residues 608–1002 (KARAASQPDL…KLHIQGRIGN (395 aa)). A Carrier domain is found at 1141–1219 (MLRRHLTAEV…KQVDCLMGIV (79 aa)). Ser1177 is subject to O-(pantetheine 4'-phosphoryl)serine. Residues 1225–1256 (LGSEPTGGSSSRSQSRRSAETSSSSTSAPSSV) are disordered. 2 stretches are compositionally biased toward low complexity: residues 1226 to 1237 (GSEPTGGSSSRS) and 1244 to 1255 (ETSSSSTSAPSS). Residues 1262-1714 (RNLYAIVGIS…SDATWFVIST (453 aa)) form the Ketosynthase family 3 (KS3) domain. Catalysis depends on for beta-ketoacyl synthase activity residues Cys1436, His1579, and Asn1633.

It in the N-terminal section; belongs to the NRP synthetase family. Requires pantetheine 4'-phosphate as cofactor.

The catalysed reaction is acetoacetyl-CoA + L-isoleucine + ATP = tenuazonic acid + AMP + diphosphate + CoA + 2 H(+). Functionally, hybrid PKS-NRPS synthetase that mediates the biosynthesis of the toxin tenuazonic acid (TeA), an inhibitor of protein biosynthesis on ribosomes by suppressing the release of new protein. TAS1 alone is sufficient for TeA synthesis via the condensation of isoleucine (Ile) with acetoacetyl-CoA by the N-terminal NRPS module and subsequent cyclization conducted by the C-terminal KS domain. This Pyricularia oryzae (strain 70-15 / ATCC MYA-4617 / FGSC 8958) (Rice blast fungus) protein is Hybrid PKS-NRPS synthetase TAS1.